A 379-amino-acid polypeptide reads, in one-letter code: RIB43A-like with coiled-coils protein 1 (379 aa).

2 coiled-coil regions span residues 43–111 and 285–337; these read EALN…RCEL and IRKV…EFRR.

It belongs to the RIB43A family. In terms of assembly, microtubule inner protein component of sperm flagellar doublet microtubules.

The protein resides in the cytoplasm. Its subcellular location is the cytoskeleton. It is found in the flagellum axoneme. This Bos taurus (Bovine) protein is RIB43A-like with coiled-coils protein 1 (RIBC1).